The chain runs to 478 residues: Ribosomal RNA small subunit methyltransferase F (478 aa).

S-adenosyl-L-methionine-binding positions include 121–127 (ASAPGSK), glutamate 145, aspartate 172, and aspartate 190. Cysteine 243 acts as the Nucleophile in catalysis.

This sequence belongs to the class I-like SAM-binding methyltransferase superfamily. RsmB/NOP family.

The protein localises to the cytoplasm. It carries out the reaction cytidine(1407) in 16S rRNA + S-adenosyl-L-methionine = 5-methylcytidine(1407) in 16S rRNA + S-adenosyl-L-homocysteine + H(+). Its function is as follows. Specifically methylates the cytosine at position 1407 (m5C1407) of 16S rRNA. This chain is Ribosomal RNA small subunit methyltransferase F, found in Shewanella sediminis (strain HAW-EB3).